A 116-amino-acid chain; its full sequence is Large ribosomal subunit protein uL18 (116 aa).

Belongs to the universal ribosomal protein uL18 family. In terms of assembly, part of the 50S ribosomal subunit; part of the 5S rRNA/L5/L18/L25 subcomplex. Contacts the 5S and 23S rRNAs.

This is one of the proteins that bind and probably mediate the attachment of the 5S RNA into the large ribosomal subunit, where it forms part of the central protuberance. The sequence is that of Large ribosomal subunit protein uL18 from Shewanella oneidensis (strain ATCC 700550 / JCM 31522 / CIP 106686 / LMG 19005 / NCIMB 14063 / MR-1).